We begin with the raw amino-acid sequence, 220 residues long: Lipoprotein-releasing system ATP-binding protein LolD (220 aa).

Positions 1–220 (MRAVDIHKSY…YRMKDGQWQS (220 aa)) constitute an ABC transporter domain. ATP is bound at residue 37–44 (GASGAGKS).

This sequence belongs to the ABC transporter superfamily. Lipoprotein translocase (TC 3.A.1.125) family. As to quaternary structure, the complex is composed of two ATP-binding proteins (LolD) and two transmembrane proteins (LolC and LolE).

The protein resides in the cell inner membrane. Functionally, part of the ABC transporter complex LolCDE involved in the translocation of mature outer membrane-directed lipoproteins, from the inner membrane to the periplasmic chaperone, LolA. Responsible for the formation of the LolA-lipoprotein complex in an ATP-dependent manner. The sequence is that of Lipoprotein-releasing system ATP-binding protein LolD from Bdellovibrio bacteriovorus (strain ATCC 15356 / DSM 50701 / NCIMB 9529 / HD100).